A 270-amino-acid polypeptide reads, in one-letter code: Putative protein-disulfide oxidoreductase RT0103 (270 aa).

An N-terminal signal peptide occupies residues 1–17 (MKNIFIVLIFLFLSSCA). A Thioredoxin domain is found at 71-264 (SVLTQDLHEQ…ISRAVDRALE (194 aa)). A disulfide bridge links Cys-117 with Cys-120.

It belongs to the thioredoxin family. DsbA subfamily.

Its subcellular location is the periplasm. Its function is as follows. May be required for disulfide bond formation in some proteins. This chain is Putative protein-disulfide oxidoreductase RT0103, found in Rickettsia typhi (strain ATCC VR-144 / Wilmington).